Consider the following 192-residue polypeptide: Transcription termination/antitermination protein NusG (192 aa).

In terms of domain architecture, KOW spans 140-168 (VGEIVIVTDGPFETFTGTVEEIDQEKNRL).

Belongs to the NusG family.

Participates in transcription elongation, termination and antitermination. The polypeptide is Transcription termination/antitermination protein NusG (Rickettsia felis (strain ATCC VR-1525 / URRWXCal2) (Rickettsia azadi)).